The chain runs to 507 residues: ATP synthase subunit alpha, chloroplastic (507 aa).

ATP is bound at residue 170-177 (GDRQTGKT).

Belongs to the ATPase alpha/beta chains family. In terms of assembly, F-type ATPases have 2 components, CF(1) - the catalytic core - and CF(0) - the membrane proton channel. CF(1) has five subunits: alpha(3), beta(3), gamma(1), delta(1), epsilon(1). CF(0) has four main subunits: a, b, b' and c.

The protein localises to the plastid. Its subcellular location is the chloroplast thylakoid membrane. It catalyses the reaction ATP + H2O + 4 H(+)(in) = ADP + phosphate + 5 H(+)(out). Functionally, produces ATP from ADP in the presence of a proton gradient across the membrane. The alpha chain is a regulatory subunit. This Piper cenocladum (Ant piper) protein is ATP synthase subunit alpha, chloroplastic.